A 906-amino-acid polypeptide reads, in one-letter code: NADH-quinone oxidoreductase subunit G (906 aa).

The region spanning 2–83 (AKIYVDSKIY…GAIISIKSTE (82 aa)) is the 2Fe-2S ferredoxin-type domain. [2Fe-2S] cluster contacts are provided by cysteine 34, cysteine 45, cysteine 48, and cysteine 67. The 4Fe-4S His(Cys)3-ligated-type domain occupies 83 to 122 (ESEVFRSAIVELLLTNHPHDCPVCEEGGHCHLQDMTVMVK). 12 residues coordinate [4Fe-4S] cluster: histidine 99, cysteine 103, cysteine 106, cysteine 112, cysteine 151, cysteine 154, cysteine 157, cysteine 201, cysteine 228, cysteine 231, cysteine 235, and cysteine 263. The region spanning 221-277 (MQYAPGICHNCSVGCNISIGERYGEIRRIENRYHENINHYLICDLGRFGYSHTNLNT) is the 4Fe-4S Mo/W bis-MGD-type domain.

This sequence belongs to the complex I 75 kDa subunit family. Composed of 13 different subunits. Subunits NuoCD, E, F, and G constitute the peripheral sector of the complex. The cofactor is [2Fe-2S] cluster. It depends on [4Fe-4S] cluster as a cofactor.

The enzyme catalyses a quinone + NADH + 5 H(+)(in) = a quinol + NAD(+) + 4 H(+)(out). Functionally, NDH-1 shuttles electrons from NADH, via FMN and iron-sulfur (Fe-S) centers, to quinones in the respiratory chain. Couples the redox reaction to proton translocation (for every two electrons transferred, four hydrogen ions are translocated across the cytoplasmic membrane), and thus conserves the redox energy in a proton gradient. This is NADH-quinone oxidoreductase subunit G (nuoG) from Buchnera aphidicola subsp. Acyrthosiphon pisum (strain APS) (Acyrthosiphon pisum symbiotic bacterium).